The sequence spans 784 residues: 5-methyltetrahydropteroyltriglutamate--homocysteine methyltransferase (784 aa).

Residues 16–19 and K112 contribute to the 5-methyltetrahydropteroyltri-L-glutamate site; that span reads RELK. L-homocysteine-binding positions include 460-462 and E513; that span reads IGS. L-methionine contacts are provided by residues 460–462 and E513; that span reads IGS. A 5-methyltetrahydropteroyltri-L-glutamate-binding site is contributed by W590. D628 serves as a coordination point for L-homocysteine. D628 serves as a coordination point for L-methionine. 5-methyltetrahydropteroyltri-L-glutamate is bound at residue E634. Residues H670, C672, and E694 each contribute to the Zn(2+) site. Catalysis depends on H723, which acts as the Proton donor. C755 is a binding site for Zn(2+).

Belongs to the vitamin-B12 independent methionine synthase family. Requires Zn(2+) as cofactor.

The catalysed reaction is 5-methyltetrahydropteroyltri-L-glutamate + L-homocysteine = tetrahydropteroyltri-L-glutamate + L-methionine. It participates in amino-acid biosynthesis; L-methionine biosynthesis via de novo pathway; L-methionine from L-homocysteine (MetE route): step 1/1. In terms of biological role, catalyzes the transfer of a methyl group from 5-methyltetrahydrofolate to homocysteine resulting in methionine formation. The polypeptide is 5-methyltetrahydropteroyltriglutamate--homocysteine methyltransferase (Acidithiobacillus ferrooxidans (strain ATCC 23270 / DSM 14882 / CIP 104768 / NCIMB 8455) (Ferrobacillus ferrooxidans (strain ATCC 23270))).